The primary structure comprises 392 residues: MKWMVVALLCLPLLEASLLRVPLRKMKSIRETMKEQGVLKDFLKTHKYDPGQKYHFGNFGDYSVLYEPMAYMDASYFGEISIGTPPQNFLVLFDTGSSNLWVSSVYCQSEACTTHARFNPSKSSTYYTEGQTFSLQYGTGSLTGFFGYDTLTVQSIQVPNQEFGLSENEPGTNFVYAQFDGIMGLAYPGLSSGGATTALQGMLGEGALSQPLFGVYLGSQQGSNGGQIVFGGVDKNLYTGEITWVPVTQELYWQITIDDFLIGDQASGWCSSQGCQGIVDTGTSLLVMPAQYLSELLQTIGAQEGEYGEYFVSCDSVSSLPTLSFVLNGVQFPLSPSSYIIQEDNFCMVGLESISLTSESGQPLWILGDVFLRSYYAIFDMGNNKVGLATSV.

A signal peptide spans 1–16 (MKWMVVALLCLPLLEA). Residues 17–62 (SLLRVPLRKMKSIRETMKEQGVLKDFLKTHKYDPGQKYHFGNFGDY) constitute a propeptide, activation peptide. One can recognise a Peptidase A1 domain in the interval 76 to 389 (YFGEISIGTP…DMGNNKVGLA (314 aa)). Asp-94 is an active-site residue. Intrachain disulfides connect Cys-107–Cys-112 and Cys-270–Cys-275. The active site involves Asp-280. A disulfide bridge connects residues Cys-314 and Cys-347.

It belongs to the peptidase A1 family.

The protein resides in the secreted. It catalyses the reaction More restricted specificity than pepsin A, but shows preferential cleavage at Tyr-|-Xaa bonds. High activity on hemoglobin.. In terms of biological role, hydrolyzes a variety of proteins. In Rattus norvegicus (Rat), this protein is Gastricsin (Pgc).